The following is a 69-amino-acid chain: Putative antitoxin AF_1481 (69 aa).

This sequence belongs to the UPF0330 family.

Possibly the antitoxin component of a type II toxin-antitoxin (TA) system. The sequence is that of Putative antitoxin AF_1481 from Archaeoglobus fulgidus (strain ATCC 49558 / DSM 4304 / JCM 9628 / NBRC 100126 / VC-16).